We begin with the raw amino-acid sequence, 468 residues long: 6-phosphogluconate dehydrogenase, NAD(+)-dependent, decarboxylating (468 aa).

Residues 9–14, 32–34, 73–75, and asparagine 101 contribute to the NAD(+) site; these read GLGVMG, NYT, and VTA. Residues asparagine 101 and 127-129 contribute to the substrate site; that span reads SGG. Lysine 181 acts as the Proton acceptor in catalysis. 184 to 185 is a binding site for substrate; sequence HN. Residue glutamate 188 is the Proton donor of the active site. 5 residues coordinate substrate: tyrosine 189, lysine 259, arginine 286, arginine 445, and histidine 451.

It belongs to the 6-phosphogluconate dehydrogenase family. In terms of assembly, homodimer.

The enzyme catalyses 6-phospho-D-gluconate + NAD(+) = D-ribulose 5-phosphate + CO2 + NADH. Functionally, catalyzes the oxidative decarboxylation of 6-phosphogluconate to ribulose 5-phosphate and CO(2), with concomitant reduction of NAD to NADH. Does not contribute to oxidative pentose phosphate (PP) pathway fluxes during growth on glucose. The functional role of GntZ remains obscure. This chain is 6-phosphogluconate dehydrogenase, NAD(+)-dependent, decarboxylating (gntZ), found in Bacillus subtilis (strain 168).